Here is a 334-residue protein sequence, read N- to C-terminus: tRNA N6-adenosine threonylcarbamoyltransferase (334 aa).

Fe cation contacts are provided by His-110 and His-114. Residues 133–137, Asp-166, Gly-179, Asp-183, and Asn-275 each bind substrate; that span reads IVSGG. Asp-303 serves as a coordination point for Fe cation.

The protein belongs to the KAE1 / TsaD family. It depends on Fe(2+) as a cofactor.

Its subcellular location is the cytoplasm. It catalyses the reaction L-threonylcarbamoyladenylate + adenosine(37) in tRNA = N(6)-L-threonylcarbamoyladenosine(37) in tRNA + AMP + H(+). Functionally, required for the formation of a threonylcarbamoyl group on adenosine at position 37 (t(6)A37) in tRNAs that read codons beginning with adenine. Is involved in the transfer of the threonylcarbamoyl moiety of threonylcarbamoyl-AMP (TC-AMP) to the N6 group of A37, together with TsaE and TsaB. TsaD likely plays a direct catalytic role in this reaction. This Salinibacter ruber (strain DSM 13855 / M31) protein is tRNA N6-adenosine threonylcarbamoyltransferase.